The sequence spans 225 residues: MMTNLFSTFDPSTNLFNLSLNWTSTFLGLLLIPSMFWLMPSRINILWNKMNLNLHNEFKTLLGKNSFQGSTLILISIFIMMLFNNFMGLFPYIFTSTSHMTLTFSIALPMWMSFMLFGWINNTNHMFTHLVPQGTPNALMSFMVLIETISNVIRPGTLAVRLAANMIAGHLLLTLLGNTGPSLTTSIMLFLIIGQMLLLILESAVAMIQAYVFSILSTLYSSEVY.

Transmembrane regions (helical) follow at residues 18 to 38, 73 to 93, 100 to 120, 126 to 146, 156 to 176, and 187 to 207; these read LSLNWTSTFLGLLLIPSMFWL, ILISIFIMMLFNNFMGLFPYI, MTLTFSIALPMWMSFMLFGWI, MFTHLVPQGTPNALMSFMVLI, GTLAVRLAANMIAGHLLLTLL, and IMLFLIIGQMLLLILESAVAM.

Belongs to the ATPase A chain family. In terms of assembly, F-type ATPases have 2 components, CF(1) - the catalytic core - and CF(0) - the membrane proton channel. CF(1) has five subunits: alpha(3), beta(3), gamma(1), delta(1), epsilon(1). CF(0) has three main subunits: a, b and c.

Its subcellular location is the mitochondrion inner membrane. Its function is as follows. Mitochondrial membrane ATP synthase (F(1)F(0) ATP synthase or Complex V) produces ATP from ADP in the presence of a proton gradient across the membrane which is generated by electron transport complexes of the respiratory chain. F-type ATPases consist of two structural domains, F(1) - containing the extramembraneous catalytic core and F(0) - containing the membrane proton channel, linked together by a central stalk and a peripheral stalk. During catalysis, ATP synthesis in the catalytic domain of F(1) is coupled via a rotary mechanism of the central stalk subunits to proton translocation. Key component of the proton channel; it may play a direct role in the translocation of protons across the membrane. In Locusta migratoria (Migratory locust), this protein is ATP synthase subunit a (ATP6).